The chain runs to 454 residues: Exopolyphosphatase PRUNE1 (454 aa).

The residue at position 1 (Met1) is an N-acetylmethionine. Asp28, Asp30, Asp106, and Asp179 together coordinate Mn(2+). The DHH motif signature appears at 106-108; sequence DHH. The segment at 394–421 is essential for homodimerization; the sequence is SLISGLSQDEEDPPLPPTPMNSLVDECP. The disordered stretch occupies residues 397 to 420; it reads SGLSQDEEDPPLPPTPMNSLVDEC. Ser400 carries the post-translational modification Phosphoserine. Thr411 carries the phosphothreonine modification. Ser415 bears the Phosphoserine mark.

This sequence belongs to the PPase class C family. Prune subfamily. In terms of assembly, homooligomer. Able to homodimerize via its C-terminal domain. Interacts with NME1. Interacts with GSK3; at focal adhesion complexes where paxillin and vinculin are colocalized. Interacts with alpha and beta tubulin. Mn(2+) serves as cofactor.

It localises to the cytoplasm. The protein localises to the nucleus. It is found in the cell junction. Its subcellular location is the focal adhesion. The enzyme catalyses diphosphate + H2O = 2 phosphate + H(+). With respect to regulation, activated by magnesium ions and inhibited by manganese ions. Inhibited by dipyridamole, moderately sensitive to IBMX and inhibited by vinpocetine. Functionally, phosphodiesterase (PDE) that has higher activity toward cAMP than cGMP, as substrate. Plays a role in cell proliferation, migration and differentiation, and acts as a negative regulator of NME1. Plays a role in the regulation of neurogenesis. Involved in the regulation of microtubule polymerization. This Mus musculus (Mouse) protein is Exopolyphosphatase PRUNE1 (Prune1).